The sequence spans 184 residues: ATP synthase subunit b, chloroplastic (184 aa).

A helical transmembrane segment spans residues 27 to 49; sequence LATNPINLSVVLGVLIFFGKGVL.

Belongs to the ATPase B chain family. F-type ATPases have 2 components, F(1) - the catalytic core - and F(0) - the membrane proton channel. F(1) has five subunits: alpha(3), beta(3), gamma(1), delta(1), epsilon(1). F(0) has four main subunits: a(1), b(1), b'(1) and c(10-14). The alpha and beta chains form an alternating ring which encloses part of the gamma chain. F(1) is attached to F(0) by a central stalk formed by the gamma and epsilon chains, while a peripheral stalk is formed by the delta, b and b' chains.

The protein resides in the plastid. It localises to the chloroplast thylakoid membrane. F(1)F(0) ATP synthase produces ATP from ADP in the presence of a proton or sodium gradient. F-type ATPases consist of two structural domains, F(1) containing the extramembraneous catalytic core and F(0) containing the membrane proton channel, linked together by a central stalk and a peripheral stalk. During catalysis, ATP synthesis in the catalytic domain of F(1) is coupled via a rotary mechanism of the central stalk subunits to proton translocation. Its function is as follows. Component of the F(0) channel, it forms part of the peripheral stalk, linking F(1) to F(0). In Cuscuta exaltata (Tall dodder), this protein is ATP synthase subunit b, chloroplastic.